The primary structure comprises 503 residues: Maturase K (503 aa).

It belongs to the intron maturase 2 family. MatK subfamily.

The protein localises to the plastid. It is found in the chloroplast. In terms of biological role, usually encoded in the trnK tRNA gene intron. Probably assists in splicing its own and other chloroplast group II introns. This Backhousia myrtifolia (Grey myrtle) protein is Maturase K.